A 295-amino-acid polypeptide reads, in one-letter code: Acetylglutamate kinase (295 aa).

Substrate-binding positions include 64-65 (GG), Arg86, and Asn190.

The protein belongs to the acetylglutamate kinase family. ArgB subfamily.

It is found in the cytoplasm. It catalyses the reaction N-acetyl-L-glutamate + ATP = N-acetyl-L-glutamyl 5-phosphate + ADP. Its pathway is amino-acid biosynthesis; L-arginine biosynthesis; N(2)-acetyl-L-ornithine from L-glutamate: step 2/4. Its function is as follows. Catalyzes the ATP-dependent phosphorylation of N-acetyl-L-glutamate. This Oleidesulfovibrio alaskensis (strain ATCC BAA-1058 / DSM 17464 / G20) (Desulfovibrio alaskensis) protein is Acetylglutamate kinase.